Consider the following 980-residue polypeptide: Peroxisomal ATPase PEX6 (980 aa).

Arg-119 carries the post-translational modification Omega-N-methylarginine. ATP-binding positions include 470–477 and 744–751; these read GPPGSGKT and GPPGTGKT.

This sequence belongs to the AAA ATPase family. In terms of assembly, interacts with PEX1; forming the PEX1-PEX6 AAA ATPase complex, which is composed of a heterohexamer formed by a trimer of PEX1-PEX6 dimers. Interacts with PEX26; interaction is direct and promotes recruitment to peroxisomal membranes. Interacts with ZFAND6.

The protein resides in the cytoplasm. It is found in the cytosol. The protein localises to the peroxisome membrane. Its subcellular location is the cell projection. It localises to the cilium. The protein resides in the photoreceptor outer segment. The enzyme catalyses ATP + H2O = ADP + phosphate + H(+). Component of the PEX1-PEX6 AAA ATPase complex, a protein dislocase complex that mediates the ATP-dependent extraction of the PEX5 receptor from peroxisomal membranes, an essential step for PEX5 recycling. Specifically recognizes PEX5 monoubiquitinated at 'Cys-11', and pulls it out of the peroxisome lumen through the PEX2-PEX10-PEX12 retrotranslocation channel. Extraction by the PEX1-PEX6 AAA ATPase complex is accompanied by unfolding of the TPR repeats and release of bound cargo from PEX5. This chain is Peroxisomal ATPase PEX6, found in Cricetulus griseus (Chinese hamster).